The primary structure comprises 509 residues: Dye-decolorizing peroxidase AauDyP1 (509 aa).

The N-terminal stretch at 1–22 (MRLSPVFVALLSGLLAADLGLA) is a signal peptide. Positions 23-61 (RSVAPRVADSPAAVTGTRKTSLLKNVAGLPPVPSAAQVA) are excised as a propeptide. Aspartate 229 serves as the catalytic Proton acceptor. Residue asparagine 343 is glycosylated (N-linked (GlcNAc...) asparagine). Position 365 (histidine 365) interacts with heme. Residues asparagine 383, asparagine 410, and asparagine 476 are each glycosylated (N-linked (GlcNAc...) asparagine).

This sequence belongs to the DyP-type peroxidase family. The cofactor is heme b.

It is found in the secreted. The catalysed reaction is Reactive Blue 5 + 2 H2O2 = 2,2'-disulfonyl azobenzene + 3-[(4-amino-6-chloro-1,3,5-triazin-2-yl)amino]benzenesulfonate + phthalate + 2 H2O + 2 H(+). It catalyses the reaction 2 a phenolic donor + H2O2 = 2 a phenolic radical donor + 2 H2O. With respect to regulation, inhibited by imidazole. In terms of biological role, manganese-independent peroxidase that is able to convert a large number of compounds, but its physiological substrate is not known. In addition to classic peroxidase substrates (e.g. 2,6-dimethoxyphenol), oxidizes dyes such as Reactive Blue 5 and Reactive Black 5. The protein is Dye-decolorizing peroxidase AauDyP1 of Auricularia auricula-judae (Judas ear fungus).